The primary structure comprises 448 residues: Probable D-serine dehydratase (448 aa).

Lys-111 bears the N6-(pyridoxal phosphate)lysine mark.

Belongs to the serine/threonine dehydratase family. DsdA subfamily. The cofactor is pyridoxal 5'-phosphate.

The catalysed reaction is D-serine = pyruvate + NH4(+). The protein is Probable D-serine dehydratase of Rhizobium etli (strain CIAT 652).